The primary structure comprises 132 residues: Small ribosomal subunit protein uS8 (132 aa).

It belongs to the universal ribosomal protein uS8 family. As to quaternary structure, part of the 30S ribosomal subunit. Contacts proteins S5 and S12.

One of the primary rRNA binding proteins, it binds directly to 16S rRNA central domain where it helps coordinate assembly of the platform of the 30S subunit. The chain is Small ribosomal subunit protein uS8 from Geobacter sulfurreducens (strain ATCC 51573 / DSM 12127 / PCA).